Reading from the N-terminus, the 101-residue chain is UPF0473 protein str1961 (101 aa).

Belongs to the UPF0473 family.

In Streptococcus thermophilus (strain CNRZ 1066), this protein is UPF0473 protein str1961.